Reading from the N-terminus, the 140-residue chain is Large ribosomal subunit protein bL17 (140 aa).

This sequence belongs to the bacterial ribosomal protein bL17 family. As to quaternary structure, part of the 50S ribosomal subunit. Contacts protein L32.

The sequence is that of Large ribosomal subunit protein bL17 from Roseobacter denitrificans (strain ATCC 33942 / OCh 114) (Erythrobacter sp. (strain OCh 114)).